The sequence spans 274 residues: Orotidine 5'-phosphate decarboxylase (274 aa).

K95 acts as the Proton donor in catalysis.

Belongs to the OMP decarboxylase family. Type 2 subfamily.

The enzyme catalyses orotidine 5'-phosphate + H(+) = UMP + CO2. It participates in pyrimidine metabolism; UMP biosynthesis via de novo pathway; UMP from orotate: step 2/2. This chain is Orotidine 5'-phosphate decarboxylase (pyrF), found in Mycobacterium bovis (strain ATCC BAA-935 / AF2122/97).